The sequence spans 361 residues: G-protein coupled receptor 68 (361 aa).

Residues 1-12 (MGNITADNTSMN) are Extracellular-facing. 2 N-linked (GlcNAc...) asparagine glycosylation sites follow: asparagine 3 and asparagine 8. Residues 13 to 49 (CDIDHTIHQTLAPVVYVMVLVVGFPANCLSLYYGYLQ) traverse the membrane as a helical segment. Cystine bridges form between cysteine 13/cysteine 258 and cysteine 94/cysteine 172. The Cytoplasmic segment spans residues 50–53 (IKAR). The helical transmembrane segment at 54 to 84 (NELGVYLCNLTVADLFYICSLPFWLQYVLQH) threads the bilayer. Topologically, residues 85–89 (DHWSH) are extracellular. The helical transmembrane segment at 90–125 (DDLSCQVCGILLYENIYISVGFLCCISIDRYLAVAH) threads the bilayer. At 126 to 133 (PFRFHQFR) the chain is on the cytoplasmic side. The helical transmembrane segment at 134-160 (TLKAAMGVSALIWVKELLTSIYFLMHE) threads the bilayer. The Extracellular portion of the chain corresponds to 161–176 (EVVEDADRHRVCFEHY). Positions 161–176 (EVVEDADRHRVCFEHY) are extracellular loop 2 (ECL2). Residues 177-214 (PLEPRQRGINYYRFLVGFLFPICLLLASYRGILRAVRR) traverse the membrane as a helical segment. Residues 215–218 (SHGT) lie on the Cytoplasmic side of the membrane. A helical membrane pass occupies residues 219-254 (QKSRKDQIQRLVLSTVVIFLACFLPYHVLLLVRSLW). Over 255 to 260 (ESSCDF) the chain is Extracellular. A helical membrane pass occupies residues 261 to 289 (AKGIFNAYHFSLLLTSFNCVADPVLYCFV). Topologically, residues 290-361 (SETTHRDLAR…MGGSPAGGLS (72 aa)) are cytoplasmic. A disordered region spans residues 340–361 (LHPAFQTPHPPGMGGSPAGGLS). A compositionally biased stretch (gly residues) spans 351-361 (GMGGSPAGGLS).

This sequence belongs to the G-protein coupled receptor 1 family.

Its subcellular location is the cell membrane. Activated by a network of residues that connects an extracellular-facing cavity to Glu-149, a conserved charged residue buried in the transmembrane core of the receptor. Protonation likely drives conformational changes in extracellular loop 2 (ECL2), which stabilizes movement of transmembrane 3 (TM3) and a series of rearrangements that connect the extracellular-facing cavity to Glu-149, a residue only conserved in proton-sensing G-protein coupled receptors. Activated in an allosteric manner by divalent metal ions at the extracellular surface following the order: Cd(2+) &gt; Co(2+) &gt; Ni(2+) &gt; Zn(2+) &gt; Fe(2+) &gt; Ca(2+) &gt; Mg(2+). Functionally, proton-sensing G-protein coupled receptor activated by extracellular pH, which is required to monitor pH changes and generate adaptive reactions. The receptor is almost silent at pH 7.8 but fully activated at pH 6.8. Ligand binding causes a conformation change that triggers signaling via guanine nucleotide-binding proteins (G proteins) and modulates the activity of downstream effectors, such as phospholipase C. GPR68 is mainly coupled to G(q) G proteins and mediates production of diacylglycerol (DAG) and inositol 1,4,5-trisphosphate (IP3). Acts as a key mechanosensor of fluid shear stress and membrane stretch. Expressed in endothelial cells of small-diameter resistance arteries, where it mediates flow-induced dilation in response to shear stress. May represents an osteoblastic pH sensor regulating cell-mediated responses to acidosis in bone. Acts as a regulator of calcium-sensing receptor CASR in a seesaw manner: GPR68-mediated signaling inhibits CASR signaling in response to protons, while CASR inhibits GPR68 in presence of extracellular calcium. This Bos taurus (Bovine) protein is G-protein coupled receptor 68 (GPR68).